The primary structure comprises 624 residues: Chaperone protein HtpG (624 aa).

Positions 1-336 (MKGQETRGFQ…SNDLPLNVSR (336 aa)) are a; substrate-binding. A b region spans residues 337–552 (EILQDSTVTR…ADEMSTQMAK (216 aa)). A c region spans residues 553 to 624 (LFAAAGQAVP…IRRMNQLLVS (72 aa)).

It belongs to the heat shock protein 90 family. Homodimer.

Its subcellular location is the cytoplasm. Its function is as follows. Molecular chaperone. Has ATPase activity. The chain is Chaperone protein HtpG from Citrobacter koseri (strain ATCC BAA-895 / CDC 4225-83 / SGSC4696).